The primary structure comprises 205 residues: Cytochrome c oxidase subunit 3 (205 aa).

The next 5 membrane-spanning stretches (helical) occupy residues 29-49 (TIVF…MYFV), 73-93 (LAIT…VFAA), 104-124 (WFLI…YEYF), 144-164 (ITTG…VVVL), and 184-204 (SYYW…IYFI).

It belongs to the cytochrome c oxidase subunit 3 family. Associates with subunits I, II and IV to form cytochrome c oxidase.

The protein localises to the cell membrane. The catalysed reaction is 4 Fe(II)-[cytochrome c] + O2 + 8 H(+)(in) = 4 Fe(III)-[cytochrome c] + 2 H2O + 4 H(+)(out). The sequence is that of Cytochrome c oxidase subunit 3 (ctaE) from Corynebacterium efficiens (strain DSM 44549 / YS-314 / AJ 12310 / JCM 11189 / NBRC 100395).